Reading from the N-terminus, the 172-residue chain is Endoribonuclease YbeY (172 aa).

The Zn(2+) site is built by histidine 137, histidine 141, and histidine 147.

The protein belongs to the endoribonuclease YbeY family. The cofactor is Zn(2+).

The protein resides in the cytoplasm. Single strand-specific metallo-endoribonuclease involved in late-stage 70S ribosome quality control and in maturation of the 3' terminus of the 16S rRNA. This is Endoribonuclease YbeY from Dehalococcoides mccartyi (strain ATCC BAA-2266 / KCTC 15142 / 195) (Dehalococcoides ethenogenes (strain 195)).